Here is a 450-residue protein sequence, read N- to C-terminus: Phosphoglucosamine mutase (450 aa).

Serine 101 serves as the catalytic Phosphoserine intermediate. The Mg(2+) site is built by serine 101, aspartate 241, aspartate 243, and aspartate 245. Serine 101 is modified (phosphoserine).

The protein belongs to the phosphohexose mutase family. Requires Mg(2+) as cofactor. Activated by phosphorylation.

The catalysed reaction is alpha-D-glucosamine 1-phosphate = D-glucosamine 6-phosphate. Functionally, catalyzes the conversion of glucosamine-6-phosphate to glucosamine-1-phosphate. The polypeptide is Phosphoglucosamine mutase (Listeria innocua serovar 6a (strain ATCC BAA-680 / CLIP 11262)).